We begin with the raw amino-acid sequence, 305 residues long: Oxygen-dependent coproporphyrinogen-III oxidase (305 aa).

Ser98 serves as a coordination point for substrate. Residues His102 and His112 each contribute to the a divalent metal cation site. The Proton donor role is filled by His112. 114–116 (NVR) contacts substrate. His151 and His181 together coordinate a divalent metal cation. Positions 246–281 (YVEFNLVYDRGTLFGLQSGGRTESILMSMPPLARWE) are important for dimerization. A substrate-binding site is contributed by 264–266 (GGR).

It belongs to the aerobic coproporphyrinogen-III oxidase family. In terms of assembly, homodimer. Requires a divalent metal cation as cofactor.

It is found in the cytoplasm. The catalysed reaction is coproporphyrinogen III + O2 + 2 H(+) = protoporphyrinogen IX + 2 CO2 + 2 H2O. It participates in porphyrin-containing compound metabolism; protoporphyrin-IX biosynthesis; protoporphyrinogen-IX from coproporphyrinogen-III (O2 route): step 1/1. Functionally, involved in the heme biosynthesis. Catalyzes the aerobic oxidative decarboxylation of propionate groups of rings A and B of coproporphyrinogen-III to yield the vinyl groups in protoporphyrinogen-IX. The protein is Oxygen-dependent coproporphyrinogen-III oxidase of Vibrio campbellii (strain ATCC BAA-1116).